We begin with the raw amino-acid sequence, 356 residues long: Nicotinate-nucleotide--dimethylbenzimidazole phosphoribosyltransferase (356 aa).

Residue Glu-317 is the Proton acceptor of the active site.

The protein belongs to the CobT family. In terms of assembly, homodimer.

The enzyme catalyses 5,6-dimethylbenzimidazole + nicotinate beta-D-ribonucleotide = alpha-ribazole 5'-phosphate + nicotinate + H(+). It functions in the pathway nucleoside biosynthesis; alpha-ribazole biosynthesis; alpha-ribazole from 5,6-dimethylbenzimidazole: step 1/2. Functionally, catalyzes the synthesis of alpha-ribazole-5'-phosphate from nicotinate mononucleotide (NAMN) and 5,6-dimethylbenzimidazole (DMB). The protein is Nicotinate-nucleotide--dimethylbenzimidazole phosphoribosyltransferase of Salmonella gallinarum (strain 287/91 / NCTC 13346).